We begin with the raw amino-acid sequence, 127 residues long: Putative lipoprotein LprJ (127 aa).

Positions 1–34 are cleaved as a signal peptide; the sequence is MTAHTHDGTRTWRTGRQATTLLALLAGVFGGAAS. Residue cysteine 35 is the site of N-palmitoyl cysteine attachment. Cysteine 35 carries S-diacylglycerol cysteine lipidation. Residues 35–99 lie on the Extracellular side of the membrane; that stretch reads CAAPIQADMM…MAEINGMSRD (65 aa). Residues 100–120 traverse the membrane as a helical segment; that stretch reads MASTFTIVAIGTYCPAVIAPL. Topologically, residues 121 to 127 are cytoplasmic; that stretch reads MPNRLQA.

May interact with sensor protein KdpD. Modified by Lgt on Cys-35 with an S-linked diacylglycerol, signal peptide is removed by LspA, modified by Lnt with amide-linked fatty acid.

It is found in the cell membrane. Functionally, overexpression induces expression of sensor protein kdpD gene at low K(+) concentrations (0 and 250 uM, tested in M.smegatis). The polypeptide is Putative lipoprotein LprJ (lprJ) (Mycobacterium tuberculosis (strain ATCC 25618 / H37Rv)).